A 524-amino-acid polypeptide reads, in one-letter code: Cytochrome P450 1A1 (524 aa).

The mitochondrial targeting signal stretch occupies residues 33–44 (LRTQVPKGLKTP). Residue S71 is glycosylated (O-linked (GlcNAc) serine). A substrate-binding site is contributed by F228. C461 is a binding site for heme.

The protein belongs to the cytochrome P450 family. Interacts with cytosolic chaperones HSP70 and HSP90; this interaction is required for initial targeting to mitochondria. Interacts (via mitochondrial targeting signal) with TOMM40 (via N-terminus); this interaction is required for translocation across the mitochondrial outer membrane. The cofactor is heme.

The protein localises to the endoplasmic reticulum membrane. It localises to the mitochondrion inner membrane. It is found in the microsome membrane. Its subcellular location is the cytoplasm. The catalysed reaction is an organic molecule + reduced [NADPH--hemoprotein reductase] + O2 = an alcohol + oxidized [NADPH--hemoprotein reductase] + H2O + H(+). It catalyses the reaction estrone + reduced [NADPH--hemoprotein reductase] + O2 = 2-hydroxyestrone + oxidized [NADPH--hemoprotein reductase] + H2O + H(+). It carries out the reaction estrone + reduced [NADPH--hemoprotein reductase] + O2 = 4-hydroxyestrone + oxidized [NADPH--hemoprotein reductase] + H2O + H(+). The enzyme catalyses estrone + reduced [NADPH--hemoprotein reductase] + O2 = 6alpha-hydroxyestrone + oxidized [NADPH--hemoprotein reductase] + H2O + H(+). The catalysed reaction is estrone + reduced [NADPH--hemoprotein reductase] + O2 = 15alpha-hydroxyestrone + oxidized [NADPH--hemoprotein reductase] + H2O + H(+). It catalyses the reaction estrone + reduced [NADPH--hemoprotein reductase] + O2 = 16alpha-hydroxyestrone + oxidized [NADPH--hemoprotein reductase] + H2O + H(+). It carries out the reaction 17beta-estradiol + reduced [NADPH--hemoprotein reductase] + O2 = 2-hydroxy-17beta-estradiol + oxidized [NADPH--hemoprotein reductase] + H2O + H(+). The enzyme catalyses 17beta-estradiol + reduced [NADPH--hemoprotein reductase] + O2 = 4-hydroxy-17beta-estradiol + oxidized [NADPH--hemoprotein reductase] + H2O + H(+). The catalysed reaction is 17beta-estradiol + reduced [NADPH--hemoprotein reductase] + O2 = 6alpha-hydroxy-17beta-estradiol + oxidized [NADPH--hemoprotein reductase] + H2O + H(+). It catalyses the reaction 17beta-estradiol + reduced [NADPH--hemoprotein reductase] + O2 = 7alpha-hydroxy-17beta-estradiol + oxidized [NADPH--hemoprotein reductase] + H2O + H(+). It carries out the reaction 17beta-estradiol + reduced [NADPH--hemoprotein reductase] + O2 = 15alpha-hydroxy-17beta-estradiol + oxidized [NADPH--hemoprotein reductase] + H2O + H(+). The enzyme catalyses (5Z,8Z,11Z)-eicosatrienoate + reduced [NADPH--hemoprotein reductase] + O2 = 19-hydroxy-(5Z,8Z,11Z)-eicosatrienoate + oxidized [NADPH--hemoprotein reductase] + H2O + H(+). The catalysed reaction is (5Z,8Z,11Z,14Z)-eicosatetraenoate + reduced [NADPH--hemoprotein reductase] + O2 = 16-hydroxy-(5Z,8Z,11Z,14Z)-eicosatetraenoate + oxidized [NADPH--hemoprotein reductase] + H2O + H(+). It catalyses the reaction (5Z,8Z,11Z,14Z)-eicosatetraenoate + reduced [NADPH--hemoprotein reductase] + O2 = 17-hydroxy-(5Z,8Z,11Z,14Z)-eicosatetraenoate + oxidized [NADPH--hemoprotein reductase] + H2O + H(+). It carries out the reaction (5Z,8Z,11Z,14Z)-eicosatetraenoate + reduced [NADPH--hemoprotein reductase] + O2 = 18-hydroxy-(5Z,8Z,11Z,14Z)-eicosatetraenoate + oxidized [NADPH--hemoprotein reductase] + H2O + H(+). The enzyme catalyses (5Z,8Z,11Z,14Z)-eicosatetraenoate + reduced [NADPH--hemoprotein reductase] + O2 = 19-hydroxy-(5Z,8Z,11Z,14Z)-eicosatetraenoate + oxidized [NADPH--hemoprotein reductase] + H2O + H(+). The catalysed reaction is (5Z,8Z,11Z,14Z,17Z)-eicosapentaenoate + reduced [NADPH--hemoprotein reductase] + O2 = 19-hydroxy-(5Z,8Z,11Z,14Z,17Z)-eicosapentaenoate + oxidized [NADPH--hemoprotein reductase] + H2O + H(+). It catalyses the reaction (5Z,8Z,11Z,14Z)-eicosatetraenoate + reduced [NADPH--hemoprotein reductase] + O2 = (8R,9S)-epoxy-(5Z,11Z,14Z)-eicosatrienoate + oxidized [NADPH--hemoprotein reductase] + H2O + H(+). It carries out the reaction (5Z,8Z,11Z,14Z)-eicosatetraenoate + reduced [NADPH--hemoprotein reductase] + O2 = (11R,12S)-epoxy-(5Z,8Z,14Z)-eicosatrienoate + oxidized [NADPH--hemoprotein reductase] + H2O + H(+). The enzyme catalyses (5Z,8Z,11Z,14Z)-eicosatetraenoate + reduced [NADPH--hemoprotein reductase] + O2 = (14S,15R)-epoxy-(5Z,8Z,11Z)-eicosatrienoate + oxidized [NADPH--hemoprotein reductase] + H2O + H(+). The catalysed reaction is (5Z,8Z,11Z,14Z)-eicosatetraenoate + reduced [NADPH--hemoprotein reductase] + O2 = (14R,15S)-epoxy-(5Z,8Z,11Z)-eicosatrienoate + oxidized [NADPH--hemoprotein reductase] + H2O + H(+). It catalyses the reaction (5Z,8Z,11Z,14Z,17Z)-eicosapentaenoate + reduced [NADPH--hemoprotein reductase] + O2 = (17R,18S)-epoxy-(5Z,8Z,11Z,14Z)-eicosatetraenoate + oxidized [NADPH--hemoprotein reductase] + H2O + H(+). It carries out the reaction (4Z,7Z,10Z,13Z,16Z,19Z)-docosahexaenoate + reduced [NADPH--hemoprotein reductase] + O2 = (19S,20R)-epoxy-(4Z,7Z,10Z,13Z,16Z)-docosapentaenoate + oxidized [NADPH--hemoprotein reductase] + H2O + H(+). The enzyme catalyses (4Z,7Z,10Z,13Z,16Z,19Z)-docosahexaenoate + reduced [NADPH--hemoprotein reductase] + O2 = (19R,20S)-epoxy-(4Z,7Z,10Z,13Z,16Z)-docosapentaenoate + oxidized [NADPH--hemoprotein reductase] + H2O + H(+). The catalysed reaction is all-trans-retinol + reduced [NADPH--hemoprotein reductase] + O2 = all-trans-retinal + oxidized [NADPH--hemoprotein reductase] + 2 H2O + H(+). It catalyses the reaction all-trans-retinal + reduced [NADPH--hemoprotein reductase] + O2 = all-trans-retinoate + oxidized [NADPH--hemoprotein reductase] + H2O + 2 H(+). It carries out the reaction (13S)-hydroperoxy-(9Z,11E)-octadecadienoate = 13-oxo-(9Z,11E)-octadecadienoate + H2O. The enzyme catalyses (12S)-hydroperoxy-(5Z,8Z,10E,14Z)-eicosatetraenoate = 12-oxo-(5Z,8Z,10E,14Z)-eicosatetraenoate + H2O. The catalysed reaction is (15S)-hydroperoxy-(5Z,8Z,11Z,13E)-eicosatetraenoate = 15-oxo-(5Z,8Z,11Z,13E)-eicosatetraenoate + H2O. It catalyses the reaction (5S)-hydroperoxy-(6E,8Z,11Z,14Z)-eicosatetraenoate = 5-oxo-(6E,8Z,11Z,14Z)-eicosatetraenoate + H2O. Its pathway is steroid hormone biosynthesis. It functions in the pathway lipid metabolism; fatty acid metabolism. It participates in cofactor metabolism; retinol metabolism. In terms of biological role, a cytochrome P450 monooxygenase involved in the metabolism of various endogenous substrates, including fatty acids, steroid hormones and vitamins. Mechanistically, uses molecular oxygen inserting one oxygen atom into a substrate, and reducing the second into a water molecule, with two electrons provided by NADPH via cytochrome P450 reductase (CPR; NADPH-ferrihemoprotein reductase). Catalyzes the hydroxylation of carbon-hydrogen bonds. Exhibits high catalytic activity for the formation of hydroxyestrogens from estrone (E1) and 17beta-estradiol (E2), namely 2-hydroxy E1 and E2, as well as D-ring hydroxylated E1 and E2 at the C15alpha and C16alpha positions. Displays different regioselectivities for polyunsaturated fatty acids (PUFA) hydroxylation. Catalyzes the epoxidation of double bonds of certain PUFA. Converts arachidonic acid toward epoxyeicosatrienoic acid (EET) regioisomers, 8,9-, 11,12-, and 14,15-EET, that function as lipid mediators in the vascular system. Displays an absolute stereoselectivity in the epoxidation of eicosapentaenoic acid (EPA) producing the 17(R),18(S) enantiomer. May play an important role in all-trans retinoic acid biosynthesis in extrahepatic tissues. Catalyzes two successive oxidative transformation of all-trans retinol to all-trans retinal and then to the active form all-trans retinoic acid. May also participate in eicosanoids metabolism by converting hydroperoxide species into oxo metabolites (lipoxygenase-like reaction, NADPH-independent). In Mesocricetus auratus (Golden hamster), this protein is Cytochrome P450 1A1 (CYP1A1).